The following is a 343-amino-acid chain: Protein RecA (343 aa).

66 to 73 (GPESSGKT) contributes to the ATP binding site.

Belongs to the RecA family.

Its subcellular location is the cytoplasm. Can catalyze the hydrolysis of ATP in the presence of single-stranded DNA, the ATP-dependent uptake of single-stranded DNA by duplex DNA, and the ATP-dependent hybridization of homologous single-stranded DNAs. It interacts with LexA causing its activation and leading to its autocatalytic cleavage. In Rickettsia canadensis (strain McKiel), this protein is Protein RecA.